Here is a 115-residue protein sequence, read N- to C-terminus: NADH-ubiquinone oxidoreductase chain 3 (115 aa).

A run of 3 helical transmembrane segments spans residues 4–24 (IVIL…AFWL), 55–75 (FFLI…LLPL), and 84–104 (TYFT…GLMY).

Belongs to the complex I subunit 3 family. In terms of assembly, core subunit of respiratory chain NADH dehydrogenase (Complex I) which is composed of 45 different subunits. Interacts with TMEM186. Interacts with TMEM242.

Its subcellular location is the mitochondrion inner membrane. The enzyme catalyses a ubiquinone + NADH + 5 H(+)(in) = a ubiquinol + NAD(+) + 4 H(+)(out). Core subunit of the mitochondrial membrane respiratory chain NADH dehydrogenase (Complex I) which catalyzes electron transfer from NADH through the respiratory chain, using ubiquinone as an electron acceptor. Essential for the catalytic activity of complex I. The sequence is that of NADH-ubiquinone oxidoreductase chain 3 from Eligmodontia typus (Highland gerbil mouse).